The primary structure comprises 285 residues: Bis(5'-nucleosyl)-tetraphosphatase, symmetrical (285 aa).

This sequence belongs to the Ap4A hydrolase family.

It carries out the reaction P(1),P(4)-bis(5'-adenosyl) tetraphosphate + H2O = 2 ADP + 2 H(+). In terms of biological role, hydrolyzes diadenosine 5',5'''-P1,P4-tetraphosphate to yield ADP. This Pseudomonas entomophila (strain L48) protein is Bis(5'-nucleosyl)-tetraphosphatase, symmetrical.